We begin with the raw amino-acid sequence, 246 residues long: MIASHAILLGVNIDHVATLRQARGTRYPDPIQAAIEAEQAGADGITLHLREDRRHIQERDVALLRDVLVSKMNLEMAVTGEMLAIAEKYCPEDCCLVPERREELTTEGGLNVTGQLARITEACVRLKEAGTRVSLFIDADPRQVEAAAQANAPVIEIHTGHFADARDERNRRKEFQRIVEAVKRGREVGLQVNAGHGLNYQNVAAIAALSDIVELNIGHAIIARALFTGMQSAVGEMKRLMREARE.

Asparagine 12 contributes to the 3-amino-2-oxopropyl phosphate binding site. 14-15 (DH) is a 1-deoxy-D-xylulose 5-phosphate binding site. 3-amino-2-oxopropyl phosphate is bound at residue arginine 23. Histidine 48 functions as the Proton acceptor in the catalytic mechanism. 1-deoxy-D-xylulose 5-phosphate contacts are provided by arginine 50 and histidine 55. Glutamate 75 acts as the Proton acceptor in catalysis. 1-deoxy-D-xylulose 5-phosphate is bound at residue threonine 105. The active-site Proton donor is histidine 196. Residues glycine 197 and 218–219 (GH) contribute to the 3-amino-2-oxopropyl phosphate site.

It belongs to the PNP synthase family. Homooctamer; tetramer of dimers.

The protein resides in the cytoplasm. The enzyme catalyses 3-amino-2-oxopropyl phosphate + 1-deoxy-D-xylulose 5-phosphate = pyridoxine 5'-phosphate + phosphate + 2 H2O + H(+). It functions in the pathway cofactor biosynthesis; pyridoxine 5'-phosphate biosynthesis; pyridoxine 5'-phosphate from D-erythrose 4-phosphate: step 5/5. Its function is as follows. Catalyzes the complicated ring closure reaction between the two acyclic compounds 1-deoxy-D-xylulose-5-phosphate (DXP) and 3-amino-2-oxopropyl phosphate (1-amino-acetone-3-phosphate or AAP) to form pyridoxine 5'-phosphate (PNP) and inorganic phosphate. This is Pyridoxine 5'-phosphate synthase from Nitrosococcus oceani (strain ATCC 19707 / BCRC 17464 / JCM 30415 / NCIMB 11848 / C-107).